A 531-amino-acid chain; its full sequence is Putative F-box protein At2g02890 (531 aa).

The F-box domain maps to 141–188 (RHSSSLTNDLIEEILSRLHSKSVARFRCVSKQCASMFASPYFKKLFQT).

In Arabidopsis thaliana (Mouse-ear cress), this protein is Putative F-box protein At2g02890.